A 731-amino-acid polypeptide reads, in one-letter code: Dynein axonemal intermediate chain 7 (731 aa).

2 disordered regions span residues 1-50 (MPPK…NERL) and 285-320 (QNTESSAAVHNGKMEGERDESESSKQVDECHSVRSE). Basic and acidic residues-rich tracts occupy residues 17 to 50 (KAEKERLQREEEEKRQREAEEARLIAEREENERL) and 296 to 320 (GKMEGERDESESSKQVDECHSVRSE).

Belongs to the DNAI7 family. As to quaternary structure, part of the multisubunit axonemal dynein complex formed at least of two heavy chains and a number of intermediate and light chains.

The protein localises to the cell projection. It localises to the cilium. Its subcellular location is the cytoplasm. Its function is as follows. Via its association with the multisubunit axonemal dynein complex, may be potentially involved in the regulation of cilia function. This Danio rerio (Zebrafish) protein is Dynein axonemal intermediate chain 7 (dnai7).